We begin with the raw amino-acid sequence, 191 residues long: Potassium-transporting ATPase KdpC subunit (191 aa).

A helical transmembrane segment spans residues 10–30 (ITLVFCVFFSVFYILVLWLFA).

It belongs to the KdpC family. As to quaternary structure, the system is composed of three essential subunits: KdpA, KdpB and KdpC.

The protein localises to the cell inner membrane. Its function is as follows. Part of the high-affinity ATP-driven potassium transport (or Kdp) system, which catalyzes the hydrolysis of ATP coupled with the electrogenic transport of potassium into the cytoplasm. This subunit acts as a catalytic chaperone that increases the ATP-binding affinity of the ATP-hydrolyzing subunit KdpB by the formation of a transient KdpB/KdpC/ATP ternary complex. The sequence is that of Potassium-transporting ATPase KdpC subunit from Bacteroides fragilis (strain ATCC 25285 / DSM 2151 / CCUG 4856 / JCM 11019 / LMG 10263 / NCTC 9343 / Onslow / VPI 2553 / EN-2).